A 294-amino-acid polypeptide reads, in one-letter code: Formamidopyrimidine-DNA glycosylase (294 aa).

Proline 2 functions as the Schiff-base intermediate with DNA in the catalytic mechanism. The active-site Proton donor is glutamate 3. The active-site Proton donor; for beta-elimination activity is lysine 61. The DNA site is built by histidine 104, arginine 123, and lysine 169. The FPG-type zinc finger occupies 255–289 (AVYGRQDEPCRRCGAPIVREKFMNRSSYSCPRCQP). Arginine 279 functions as the Proton donor; for delta-elimination activity in the catalytic mechanism.

Belongs to the FPG family. In terms of assembly, monomer. Requires Zn(2+) as cofactor.

It catalyses the reaction Hydrolysis of DNA containing ring-opened 7-methylguanine residues, releasing 2,6-diamino-4-hydroxy-5-(N-methyl)formamidopyrimidine.. The enzyme catalyses 2'-deoxyribonucleotide-(2'-deoxyribose 5'-phosphate)-2'-deoxyribonucleotide-DNA = a 3'-end 2'-deoxyribonucleotide-(2,3-dehydro-2,3-deoxyribose 5'-phosphate)-DNA + a 5'-end 5'-phospho-2'-deoxyribonucleoside-DNA + H(+). Functionally, involved in base excision repair of DNA damaged by oxidation or by mutagenic agents. Acts as a DNA glycosylase that recognizes and removes damaged bases. Has a preference for oxidized purines, such as 7,8-dihydro-8-oxoguanine (8-oxoG). Has AP (apurinic/apyrimidinic) lyase activity and introduces nicks in the DNA strand. Cleaves the DNA backbone by beta-delta elimination to generate a single-strand break at the site of the removed base with both 3'- and 5'-phosphates. This is Formamidopyrimidine-DNA glycosylase from Nocardia farcinica (strain IFM 10152).